The following is a 144-amino-acid chain: Nucleoside diphosphate kinase (144 aa).

Positions 11, 59, 87, 93, 104, and 114 each coordinate ATP. Histidine 117 functions as the Pros-phosphohistidine intermediate in the catalytic mechanism.

The protein belongs to the NDK family. In terms of assembly, homotetramer. The cofactor is Mg(2+).

The protein resides in the cytoplasm. The enzyme catalyses a 2'-deoxyribonucleoside 5'-diphosphate + ATP = a 2'-deoxyribonucleoside 5'-triphosphate + ADP. The catalysed reaction is a ribonucleoside 5'-diphosphate + ATP = a ribonucleoside 5'-triphosphate + ADP. Its function is as follows. Major role in the synthesis of nucleoside triphosphates other than ATP. The ATP gamma phosphate is transferred to the NDP beta phosphate via a ping-pong mechanism, using a phosphorylated active-site intermediate. This chain is Nucleoside diphosphate kinase, found in Aliivibrio fischeri (strain ATCC 700601 / ES114) (Vibrio fischeri).